The sequence spans 264 residues: Proteasome subunit alpha type-4 (264 aa).

It belongs to the peptidase T1A family. The 26S proteasome consists of a 20S proteasome core and two 19S regulatory subunits. The 20S proteasome core is composed of 28 subunits that are arranged in four stacked rings, resulting in a barrel-shaped structure. The two end rings are each formed by seven alpha subunits, and the two central rings are each formed by seven beta subunits. The catalytic chamber with the active sites is on the inside of the barrel. Interacts with PI31.

It is found in the cytoplasm. Its subcellular location is the nucleus. The proteasome is a multicatalytic proteinase complex which is characterized by its ability to cleave peptides with Arg, Phe, Tyr, Leu, and Glu adjacent to the leaving group at neutral or slightly basic pH. The proteasome has an ATP-dependent proteolytic activity. The sequence is that of Proteasome subunit alpha type-4 (Prosalpha3) from Drosophila melanogaster (Fruit fly).